The sequence spans 109 residues: Parvalbumin-7 (109 aa).

Position 2 is an N-acetylalanine (A2). EF-hand domains are found at residues 39–74 (LSAD…FSAD) and 78–109 (LTDK…LVHE). The Ca(2+) site is built by D52, D54, S56, F58, E60, E63, D91, D93, D95, K97, and E102.

It belongs to the parvalbumin family.

In muscle, parvalbumin is thought to be involved in relaxation after contraction. It binds two calcium ions. This is Parvalbumin-7 (pvalb7) from Danio rerio (Zebrafish).